Here is a 638-residue protein sequence, read N- to C-terminus: Chaperone protein HtpG (638 aa).

The interval 1-346 is a; substrate-binding; the sequence is MSQQETHGFQ…SNDLPLNVSR (346 aa). Residues 347–563 form a b region; that stretch reads EILQDNKVTT…EGEMSTQMIK (217 aa). Positions 564–638 are c; the sequence is LMEAAGQAVP…MNEMLLAKLK (75 aa).

Belongs to the heat shock protein 90 family. In terms of assembly, homodimer.

Its subcellular location is the cytoplasm. Molecular chaperone. Has ATPase activity. The polypeptide is Chaperone protein HtpG (Shewanella sediminis (strain HAW-EB3)).